A 476-amino-acid chain; its full sequence is MKVGITASKSDDFSEWYTQVVLKAELADYAPVKGLIVLRPDGYSIWESIRTSLDVKLAARGVRNGFLPVLIPESLLGKEKEHFAGFNPEVFWVTHSGENKVGDRLALRPTSETLAYSLYSKWIKSWRDLPLRINFWNTALRAEIKSTKPFLRTSEFLWQEGHTVHACSEEAESEVAAILELYRETVEGDLAIPVITGRKSEKEKFVGAVYTTTMESMMPDGRALQMGTSHFLGQNFSRPFEVKFADKDNVEHFAWQTSWGLSWRLIGAMIMVHGDDKGLVLPPKVAPLQVVIIPISYSGEEGAQVLAAAEGMEAELLKAGIRARTDKREELTPGFKFHDWEMRGVPVRIEIGPRDLKDGSAVLATRHDGKKSKVPLDGAAVNIEEELCRVQTEMLGAAKRALDGMIHDASSYGALTKAVEGGGFVRAAWCGGLECEEKVKEETGADIRVVPEGGAEGACIVCGGRAASIPLFARGY.

The protein belongs to the class-II aminoacyl-tRNA synthetase family. ProS type 3 subfamily. As to quaternary structure, homodimer.

It localises to the cytoplasm. It catalyses the reaction tRNA(Pro) + L-proline + ATP = L-prolyl-tRNA(Pro) + AMP + diphosphate. Functionally, catalyzes the attachment of proline to tRNA(Pro) in a two-step reaction: proline is first activated by ATP to form Pro-AMP and then transferred to the acceptor end of tRNA(Pro). This Cenarchaeum symbiosum (strain A) protein is Proline--tRNA ligase.